A 372-amino-acid polypeptide reads, in one-letter code: Saccharopine dehydrogenase [NAD(+), L-lysine-forming] (372 aa).

L-saccharopine-binding residues include Arg18 and Lys77. The active-site Proton acceptor is Lys77. Residue His95 is the Proton donor of the active site. An L-saccharopine-binding site is contributed by Gln100. Arg129 serves as a coordination point for NAD(+). L-saccharopine-binding residues include Arg130 and Phe134. NAD(+)-binding positions include 200–201, Asp224, Thr228, Tyr248, and Val275; that span reads GR. Cys202 and Cys246 are joined by a disulfide. 276-278 contributes to the L-saccharopine binding site; the sequence is SAD. 316–319 contacts NAD(+); the sequence is IDHL.

Belongs to the AlaDH/PNT family. In terms of assembly, monomer.

It catalyses the reaction L-saccharopine + NAD(+) + H2O = L-lysine + 2-oxoglutarate + NADH + H(+). It participates in amino-acid biosynthesis; L-lysine biosynthesis via AAA pathway; L-lysine from L-alpha-aminoadipate (fungal route): step 3/3. In terms of biological role, catalyzes the NAD(+)-dependent cleavage of saccharopine to L-lysine and 2-oxoglutarate, the final step in the alpha-aminoadipate (AAA) pathway for lysin biosynthesis. The protein is Saccharopine dehydrogenase [NAD(+), L-lysine-forming] (lys-4) of Neurospora crassa (strain ATCC 24698 / 74-OR23-1A / CBS 708.71 / DSM 1257 / FGSC 987).